The following is a 123-amino-acid chain: Translation initiation factor 1A (123 aa).

Over residues 1-11 (MSPDKTEDEDK) the composition is skewed to acidic residues. Residues 1-26 (MSPDKTEDEDKDVNVDQDQFNEEEES) form a disordered region. An S1-like domain is found at 28–102 (GRVILPNKKK…EKADVVYRYT (75 aa)).

This sequence belongs to the eIF-1A family.

Functionally, seems to be required for maximal rate of protein biosynthesis. Enhances ribosome dissociation into subunits and stabilizes the binding of the initiator Met-tRNA(I) to 40 S ribosomal subunits. This Thermoplasma volcanium (strain ATCC 51530 / DSM 4299 / JCM 9571 / NBRC 15438 / GSS1) protein is Translation initiation factor 1A (eIF1A).